The following is a 318-amino-acid chain: MQIYLANPRGFCAGVDRAIAIVNEALARFEPPIYVRHEVVHNKFVVSDLANRGAVFVEELHEVPDGSIVIFSAHGVSKAVEDEAERRDLTVFDATCPLVTKVHIEVAKFAREKMDAVLIGHQGHPEVEGTMGRFSAQYGGEIHLVENEADVEKLEVSDPDRLAFVTQTTLSMDDTAVVIDALRKKFPNIQGPRKDDICYATQNRQDAVKDLAQRCEVVLVVGSPNSSNSNRLRELAERMNCKAYLIDNAGEMKKEWFAGVGAVGVTAGASAPEILIQEVLNQLQQWGGDLPDELKGIEENVTFSLPKELRIPVKEVGL.

C12 contributes to the [4Fe-4S] cluster binding site. The (2E)-4-hydroxy-3-methylbut-2-enyl diphosphate site is built by H41 and H74. Positions 41 and 74 each coordinate dimethylallyl diphosphate. Positions 41 and 74 each coordinate isopentenyl diphosphate. C96 contributes to the [4Fe-4S] cluster binding site. H124 provides a ligand contact to (2E)-4-hydroxy-3-methylbut-2-enyl diphosphate. H124 provides a ligand contact to dimethylallyl diphosphate. H124 provides a ligand contact to isopentenyl diphosphate. E126 acts as the Proton donor in catalysis. T168 contacts (2E)-4-hydroxy-3-methylbut-2-enyl diphosphate. [4Fe-4S] cluster is bound at residue C198. (2E)-4-hydroxy-3-methylbut-2-enyl diphosphate contacts are provided by S226, S227, N228, and S270. Dimethylallyl diphosphate-binding residues include S226, S227, N228, and S270. S226, S227, N228, and S270 together coordinate isopentenyl diphosphate.

The protein belongs to the IspH family. It depends on [4Fe-4S] cluster as a cofactor.

The enzyme catalyses isopentenyl diphosphate + 2 oxidized [2Fe-2S]-[ferredoxin] + H2O = (2E)-4-hydroxy-3-methylbut-2-enyl diphosphate + 2 reduced [2Fe-2S]-[ferredoxin] + 2 H(+). The catalysed reaction is dimethylallyl diphosphate + 2 oxidized [2Fe-2S]-[ferredoxin] + H2O = (2E)-4-hydroxy-3-methylbut-2-enyl diphosphate + 2 reduced [2Fe-2S]-[ferredoxin] + 2 H(+). Its pathway is isoprenoid biosynthesis; dimethylallyl diphosphate biosynthesis; dimethylallyl diphosphate from (2E)-4-hydroxy-3-methylbutenyl diphosphate: step 1/1. It participates in isoprenoid biosynthesis; isopentenyl diphosphate biosynthesis via DXP pathway; isopentenyl diphosphate from 1-deoxy-D-xylulose 5-phosphate: step 6/6. Catalyzes the conversion of 1-hydroxy-2-methyl-2-(E)-butenyl 4-diphosphate (HMBPP) into a mixture of isopentenyl diphosphate (IPP) and dimethylallyl diphosphate (DMAPP). Acts in the terminal step of the DOXP/MEP pathway for isoprenoid precursor biosynthesis. The sequence is that of 4-hydroxy-3-methylbut-2-enyl diphosphate reductase from Psychrobacter sp. (strain PRwf-1).